An 84-amino-acid polypeptide reads, in one-letter code: Large ribosomal subunit protein bL27 (84 aa).

The interval 1 to 21 (MATKKAGGSSRNGRDSAGRRL) is disordered.

The protein belongs to the bacterial ribosomal protein bL27 family.

The chain is Large ribosomal subunit protein bL27 from Pelagibacter ubique (strain HTCC1062).